We begin with the raw amino-acid sequence, 112 residues long: Iron-sulfur cluster insertion protein ErpA (112 aa).

Residues Cys40, Cys104, and Cys106 each coordinate iron-sulfur cluster.

It belongs to the HesB/IscA family. In terms of assembly, homodimer. It depends on iron-sulfur cluster as a cofactor.

In terms of biological role, required for insertion of 4Fe-4S clusters for at least IspG. This chain is Iron-sulfur cluster insertion protein ErpA, found in Pseudoalteromonas translucida (strain TAC 125).